The sequence spans 286 residues: Release factor glutamine methyltransferase (286 aa).

Residues D148 and N194 each contribute to the S-adenosyl-L-methionine site. Residue 194-197 (NPPY) coordinates substrate.

This sequence belongs to the protein N5-glutamine methyltransferase family. PrmC subfamily.

It catalyses the reaction L-glutaminyl-[peptide chain release factor] + S-adenosyl-L-methionine = N(5)-methyl-L-glutaminyl-[peptide chain release factor] + S-adenosyl-L-homocysteine + H(+). In terms of biological role, methylates the class 1 translation termination release factors RF1/PrfA and RF2/PrfB on the glutamine residue of the universally conserved GGQ motif. The chain is Release factor glutamine methyltransferase from Leptospira interrogans serogroup Icterohaemorrhagiae serovar Lai (strain 56601).